The following is a 329-amino-acid chain: UPF0158 protein CT_429 (329 aa).

Positions 292–329 are disordered; that stretch reads GYDSDGETGDFFDEEYDDEEEEIKPKKTTKRGRKKSRS. Residues 295–313 are compositionally biased toward acidic residues; the sequence is SDGETGDFFDEEYDDEEEE. Residues 317–329 show a composition bias toward basic residues; the sequence is KKTTKRGRKKSRS.

It belongs to the UPF0158 family.

This is UPF0158 protein CT_429 from Chlamydia trachomatis serovar D (strain ATCC VR-885 / DSM 19411 / UW-3/Cx).